The following is a 93-amino-acid chain: Putative regulatory protein Clos_1422 (93 aa).

This sequence belongs to the RemA family.

This chain is Putative regulatory protein Clos_1422, found in Alkaliphilus oremlandii (strain OhILAs) (Clostridium oremlandii (strain OhILAs)).